Reading from the N-terminus, the 91-residue chain is uncharacterized protein (91 aa).

3 consecutive transmembrane segments (helical) span residues Val9–Pro29, Leu44–Trp64, and Gln71–Leu91.

The protein localises to the cell membrane. This is an uncharacterized protein from Bacillus subtilis (strain 168).